The sequence spans 31 residues: Cytochrome b6-f complex subunit 6 (31 aa).

The chain crosses the membrane as a helical span at residues 4–24 (ITSFFGFLLAALTITSVLFIG).

Belongs to the PetL family. As to quaternary structure, the 4 large subunits of the cytochrome b6-f complex are cytochrome b6, subunit IV (17 kDa polypeptide, PetD), cytochrome f and the Rieske protein, while the 4 small subunits are PetG, PetL, PetM and PetN. The complex functions as a dimer.

It localises to the plastid. The protein localises to the chloroplast thylakoid membrane. Component of the cytochrome b6-f complex, which mediates electron transfer between photosystem II (PSII) and photosystem I (PSI), cyclic electron flow around PSI, and state transitions. PetL is important for photoautotrophic growth as well as for electron transfer efficiency and stability of the cytochrome b6-f complex. The polypeptide is Cytochrome b6-f complex subunit 6 (Oenothera elata subsp. hookeri (Hooker's evening primrose)).